Reading from the N-terminus, the 686-residue chain is Thymidine kinase (686 aa).

Polar residues predominate over residues 1 to 14 (MASNSHNNYNTPRR). 2 disordered regions span residues 1–21 (MASNSHNNYNTPRRQNYDVPK) and 64–85 (NPGLKPRGLVRPRQDADNPSSD). 243–250 (GCMAAGKT) is an ATP binding site. Residue glutamate 270 is the Proton acceptor of the active site. Glutamine 308 provides a ligand contact to substrate. Arginine 398 is an ATP binding site. Residue arginine 404 coordinates substrate.

This sequence belongs to the herpesviridae thymidine kinase family. In terms of assembly, homodimer.

It carries out the reaction thymidine + ATP = dTMP + ADP + H(+). Functionally, catalyzes the transfer of the gamma-phospho group of ATP to thymidine to generate dTMP in the salvage pathway of pyrimidine synthesis. The dTMP serves as a substrate for DNA polymerase during viral DNA replication. Allows the virus to be reactivated and to grow in non-proliferative cells lacking a high concentration of phosphorylated nucleic acid precursors. The sequence is that of Thymidine kinase from Alcelaphine herpesvirus 1 (strain WC11) (AlHV-1).